A 20-amino-acid polypeptide reads, in one-letter code: Phylloseptin-O1 (20 aa).

Gly20 bears the Glycine amide mark.

In terms of tissue distribution, expressed by the skin glands.

Its subcellular location is the secreted. In terms of biological role, has antiprotozoal activity against T.cruzi. This is Phylloseptin-O1 (psn4) from Pithecopus oreades (Orange-legged leaf frog).